The sequence spans 225 residues: Imidazoleglycerol-phosphate dehydratase (225 aa).

Belongs to the imidazoleglycerol-phosphate dehydratase family.

The catalysed reaction is D-erythro-1-(imidazol-4-yl)glycerol 3-phosphate = 3-(imidazol-4-yl)-2-oxopropyl phosphate + H2O. Its pathway is amino-acid biosynthesis; L-histidine biosynthesis; L-histidine from 5-phospho-alpha-D-ribose 1-diphosphate: step 6/9. The polypeptide is Imidazoleglycerol-phosphate dehydratase (PTH3) (Pyricularia oryzae (strain 70-15 / ATCC MYA-4617 / FGSC 8958) (Rice blast fungus)).